The primary structure comprises 370 residues: Protein commissureless 1 (370 aa).

At 1-136 the chain is on the extracellular side; that stretch reads MISTTDYPTV…DADMHVIINY (136 aa). The required for vesicular localization stretch occupies residues 108–131; the sequence is LRDRSEESGESSWWSQIFGDADMH. Residues 137–157 traverse the membrane as a helical segment; sequence LWIGVVSSLVILSLVFILFSC. Over 158–370 the chain is Cytoplasmic; it reads YFYRKFRTWK…CASLVVVVAA (213 aa). Short sequence motifs (PY-motif) lie at residues 220–223 and 229–232; these read PPCY and LPSY. The interval 227–237 is interaction with Nedd4; that stretch reads TGLPSYDEALH. A disordered region spans residues 287–312; it reads VEEDKADSSSSTSASASPSSSESSNL. The span at 294–312 shows a compositional bias: low complexity; sequence SSSSTSASASPSSSESSNL.

The protein belongs to the commissureless family. In terms of assembly, interacts (probably via PY-motifs) with Nedd4 (via WW2 domain). Interacts with Robo. Post-translationally, ubiquitinated by Nedd4; which promotes endocytosis of the comm/robo complex and comm proteasomal degradation. Not ubiquitinated by Nedd4.

The protein resides in the cytoplasmic vesicle membrane. It is found in the cell membrane. Functionally, controls axon guidance across the CNS midline by preventing the delivery of Robo to the growth cone. The protein is Protein commissureless 1 of Drosophila melanogaster (Fruit fly).